Reading from the N-terminus, the 616-residue chain is Sulfite reductase [NADPH] flavoprotein alpha-component (616 aa).

The Flavodoxin-like domain maps to 80-218 (LTIIFASQTG…SAAQWRKQAL (139 aa)). Residues 86 to 91 (SQTGNA), 133 to 136 (STNG), and 169 to 178 (LGDSSYEFFC) contribute to the FMN site. Residues 251–465 (QKPYAATLLT…VENNNNFKLP (215 aa)) enclose the FAD-binding FR-type domain. Residues Thr339, Gly373, 403–406 (RLYS), 421–423 (TVG), Tyr427, and 436–439 (GGAS) each bind FAD. Residues 536–537 (SR), 542–546 (KVYVQ), and Asp578 contribute to the NADP(+) site. Residue Tyr616 coordinates FAD.

The protein belongs to the NADPH-dependent sulphite reductase flavoprotein subunit CysJ family. It in the N-terminal section; belongs to the flavodoxin family. This sequence in the C-terminal section; belongs to the flavoprotein pyridine nucleotide cytochrome reductase family. As to quaternary structure, alpha(8)-beta(8). The alpha component is a flavoprotein, the beta component is a hemoprotein. FAD serves as cofactor. The cofactor is FMN.

The enzyme catalyses hydrogen sulfide + 3 NADP(+) + 3 H2O = sulfite + 3 NADPH + 4 H(+). Its pathway is sulfur metabolism; hydrogen sulfide biosynthesis; hydrogen sulfide from sulfite (NADPH route): step 1/1. Its function is as follows. Component of the sulfite reductase complex that catalyzes the 6-electron reduction of sulfite to sulfide. This is one of several activities required for the biosynthesis of L-cysteine from sulfate. The flavoprotein component catalyzes the electron flow from NADPH -&gt; FAD -&gt; FMN to the hemoprotein component. In Vibrio vulnificus (strain CMCP6), this protein is Sulfite reductase [NADPH] flavoprotein alpha-component.